The primary structure comprises 154 residues: 6,7-dimethyl-8-ribityllumazine synthase (154 aa).

5-amino-6-(D-ribitylamino)uracil contacts are provided by residues Phe22, 56–58, and 80–82; these read SFE and AVI. Position 85–86 (85–86) interacts with (2S)-2-hydroxy-3-oxobutyl phosphate; sequence ST. His88 serves as the catalytic Proton donor. Tyr113 provides a ligand contact to 5-amino-6-(D-ribitylamino)uracil. Residue Arg127 participates in (2S)-2-hydroxy-3-oxobutyl phosphate binding.

The protein belongs to the DMRL synthase family. In terms of assembly, forms an icosahedral capsid composed of 60 subunits, arranged as a dodecamer of pentamers.

The enzyme catalyses (2S)-2-hydroxy-3-oxobutyl phosphate + 5-amino-6-(D-ribitylamino)uracil = 6,7-dimethyl-8-(1-D-ribityl)lumazine + phosphate + 2 H2O + H(+). It participates in cofactor biosynthesis; riboflavin biosynthesis; riboflavin from 2-hydroxy-3-oxobutyl phosphate and 5-amino-6-(D-ribitylamino)uracil: step 1/2. Its function is as follows. Catalyzes the formation of 6,7-dimethyl-8-ribityllumazine by condensation of 5-amino-6-(D-ribitylamino)uracil with 3,4-dihydroxy-2-butanone 4-phosphate. This is the penultimate step in the biosynthesis of riboflavin. This Persephonella marina (strain DSM 14350 / EX-H1) protein is 6,7-dimethyl-8-ribityllumazine synthase.